The primary structure comprises 144 residues: Large ribosomal subunit protein uL11 (144 aa).

This sequence belongs to the universal ribosomal protein uL11 family. Part of the ribosomal stalk of the 50S ribosomal subunit. Interacts with L10 and the large rRNA to form the base of the stalk. L10 forms an elongated spine to which L12 dimers bind in a sequential fashion forming a multimeric L10(L12)X complex. One or more lysine residues are methylated.

Forms part of the ribosomal stalk which helps the ribosome interact with GTP-bound translation factors. In Rhodococcus opacus (strain B4), this protein is Large ribosomal subunit protein uL11.